The following is a 550-amino-acid chain: Lariat debranching enzyme (550 aa).

A divalent metal cation is bound by residues Cys8 and His10. Ser28 carries the post-translational modification Phosphoserine. The a divalent metal cation site is built by Asp39 and Asn84. The segment at 124-154 (SGIFKSHDYRKGHFECPPYNSSTIRSIYHVR) is lariat recognition loop. Lys128 carries the N6-acetyllysine modification. Residues His174, His226, and His228 each coordinate a divalent metal cation. Residues 390–550 (EHHQCGEYEQ…AVDDGDASAE (161 aa)) are disordered. The span at 416-426 (NTDTSALSSIN) shows a compositional bias: polar residues. The span at 430-445 (IMLDEEEEEEEEEEEA) shows a compositional bias: acidic residues. Positions 450-483 (SDMNTPSVEPASDQASDLSTSFSDIRNLPSSMFV) are enriched in polar residues. Ser470, Ser480, Ser484, Ser485, Ser489, Ser491, Ser494, Ser505, and Ser520 each carry phosphoserine. A compositionally biased stretch (basic and acidic residues) spans 498–528 (KCGETVESGDEKDLAKFPLKRLSDEHEPEQR).

This sequence belongs to the lariat debranching enzyme family. Requires Fe(2+) as cofactor. The cofactor is Zn(2+). It depends on Mn(2+) as a cofactor.

It localises to the nucleus. With respect to regulation, active in presence of diverse metals including Fe(2+), Zn(2+), Mn(2+). Also activated by Ca(2+). Binds two metal cations in two adjacent alpha and beta metal-binding pockets. In terms of biological role, cleaves the 2'-5' phosphodiester linkage at the branch point of excised lariat intron RNA and converts them into linear molecules that can be subsequently degraded, thereby facilitating ribonucleotide turnover. Linked to its role in pre-mRNA processing mechanism, may also participate in retrovirus replication and have an antiviral cell-intrinsic defense function. The chain is Lariat debranching enzyme (Dbr1) from Mus musculus (Mouse).